A 291-amino-acid polypeptide reads, in one-letter code: tRNA (guanine-N(1)-)-methyltransferase (291 aa).

Residues glycine 160 and 184-189 (IGDYVL) each bind S-adenosyl-L-methionine.

It belongs to the RNA methyltransferase TrmD family. In terms of assembly, homodimer.

The protein resides in the cytoplasm. It catalyses the reaction guanosine(37) in tRNA + S-adenosyl-L-methionine = N(1)-methylguanosine(37) in tRNA + S-adenosyl-L-homocysteine + H(+). Functionally, specifically methylates guanosine-37 in various tRNAs. This Corynebacterium efficiens (strain DSM 44549 / YS-314 / AJ 12310 / JCM 11189 / NBRC 100395) protein is tRNA (guanine-N(1)-)-methyltransferase.